The following is a 303-amino-acid chain: RELT-like protein 2 (303 aa).

A helical transmembrane segment spans residues 15 to 35 (LYMLFLLVLVFFLMGLVGFMI). Disordered regions lie at residues 47-68 (RTSR…DDVN), 135-214 (CSRS…QPRT), and 249-303 (PCTL…AGGM). Position 52 is a phosphoserine (Ser-52). Basic and acidic residues-rich tracts occupy residues 148–158 (RSKEGKSRPRP) and 172–188 (THIE…DGSP). The span at 194 to 212 (GSGGGQEPGGSQAAGGGQP) shows a compositional bias: gly residues. Residues 274–295 (GLSSQEANGQPTKLDTSGQQES) show a composition bias toward polar residues.

Belongs to the RELT family. In terms of assembly, interacts with RELT, RELL1, OXSR1, PLSCR1 and TRAF2.

It is found in the cell membrane. Its function is as follows. Induces activation of MAPK14/p38 cascade, when overexpressed. Induces apoptosis, when overexpressed. The protein is RELT-like protein 2 (Rell2) of Mus musculus (Mouse).